Consider the following 201-residue polypeptide: LIM domain-containing protein PLIM2b (201 aa).

LIM zinc-binding domains are found at residues 8-68 and 103-163; these read DKCT…LFKE and DKCA…LFME. The disordered stretch occupies residues 171-201; sequence KKKSESQEVLPEVVPEEQPAPPPPDENREDN. Residues 177–187 show a composition bias toward low complexity; that stretch reads QEVLPEVVPEE.

Interacts with NEK3.

The polypeptide is LIM domain-containing protein PLIM2b (Oryza sativa subsp. japonica (Rice)).